We begin with the raw amino-acid sequence, 506 residues long: MASSLLTSSGMIPTTGSTVVGRSVLPFQSSLHSLRLTHSYKNPALFISCCSSVSKNAATSSTDLKPAVERWPEYLPNKLPDENYVRVFDTTLRDGEQAPGGSLTPPQKLEIARQLAKLRVDIMEVGFPGSSEEELETVKTIAKTVGNEVDEETGYVPVICAIARSKHRDIEAAWEAVKYAKRPRILIFTSTSDIHMKYKLKKTQEEVIEMAVSSIRFAKSLGFNDIQLGCEDGGRSDKDFLCKILGEAIKADVTVVNVADTVGINMPHEYAELVTYLKANTPGIDDVVFSVHCHNDLGLATANSIAGIRAGARQVEVTINGIGERSGNASLEEVVMALKCRGAYVINGVYTRIDTRQIMATSKMVQEYTGLYVQAHKPIVGANCFVHESGIHQDGILKNRSTYEILSPEDIGIVKSQNSGLVLGKLSGRHAVKDRLKELGYELDDEKLNAVFSLFRDLTKNKKRITDADMKALVTSSDGISLEKSNGANGLKSNGYIPVLQVSSNV.

The transit peptide at 1 to 49 directs the protein to the chloroplast; that stretch reads MASSLLTSSGMIPTTGSTVVGRSVLPFQSSLHSLRLTHSYKNPALFISC. A Pyruvate carboxyltransferase domain is found at 85-359; sequence VRVFDTTLRD…YTRIDTRQIM (275 aa).

Belongs to the alpha-IPM synthase/homocitrate synthase family.

The protein localises to the plastid. It localises to the chloroplast. The catalysed reaction is an omega-(methylsulfanyl)-2-oxoalkanoate + acetyl-CoA + H2O = a 2-(omega-methylsulfanyl)alkylmalate + CoA + H(+). Catalyzes only the first methionine chain elongation cycle. In Arabidopsis thaliana (Mouse-ear cress), this protein is Methylthioalkylmalate synthase 2, chloroplastic (MAM2).